The primary structure comprises 407 residues: Na(+)-translocating NADH-quinone reductase subunit F (407 aa).

A helical membrane pass occupies residues I6–V26. The 2Fe-2S ferredoxin-type domain maps to G35–V127. C70, C76, C79, and C111 together coordinate [2Fe-2S] cluster. Residues V130 to K269 enclose the FAD-binding FR-type domain.

The protein belongs to the NqrF family. In terms of assembly, composed of six subunits; NqrA, NqrB, NqrC, NqrD, NqrE and NqrF. The cofactor is [2Fe-2S] cluster. FAD is required as a cofactor.

The protein localises to the cell inner membrane. It carries out the reaction a ubiquinone + n Na(+)(in) + NADH + H(+) = a ubiquinol + n Na(+)(out) + NAD(+). NQR complex catalyzes the reduction of ubiquinone-1 to ubiquinol by two successive reactions, coupled with the transport of Na(+) ions from the cytoplasm to the periplasm. The first step is catalyzed by NqrF, which accepts electrons from NADH and reduces ubiquinone-1 to ubisemiquinone by a one-electron transfer pathway. The sequence is that of Na(+)-translocating NADH-quinone reductase subunit F from Pseudomonas aeruginosa (strain UCBPP-PA14).